Here is a 76-residue protein sequence, read N- to C-terminus: Small ribosomal subunit protein bS18 (76 aa).

Belongs to the bacterial ribosomal protein bS18 family. As to quaternary structure, part of the 30S ribosomal subunit. Forms a tight heterodimer with protein bS6.

Binds as a heterodimer with protein bS6 to the central domain of the 16S rRNA, where it helps stabilize the platform of the 30S subunit. This Methylococcus capsulatus (strain ATCC 33009 / NCIMB 11132 / Bath) protein is Small ribosomal subunit protein bS18.